The sequence spans 133 residues: MVMNIRVLTPDRVICSTTADEVVLPGLTGQVGVLDGHAALITALETGLLRIKLNDKWTPIILCGGLAEIDRDRVTVLVNDVEELTDIGLSEATQELEKATLAVENAKTSKERLDASVELKKATARLEAVNYLS.

The protein belongs to the ATPase epsilon chain family. In terms of assembly, F-type ATPases have 2 components, CF(1) - the catalytic core - and CF(0) - the membrane proton channel. CF(1) has five subunits: alpha(3), beta(3), gamma(1), delta(1), epsilon(1). CF(0) has three main subunits: a, b and c.

It localises to the plastid. The protein localises to the chloroplast thylakoid membrane. Produces ATP from ADP in the presence of a proton gradient across the membrane. The sequence is that of ATP synthase epsilon chain, chloroplastic from Phaeodactylum tricornutum (strain CCAP 1055/1).